The chain runs to 274 residues: (R)-stereoselective amidase (274 aa).

A CN hydrolase domain is found at 1 to 234 (MKIELVQLAG…EVRHVVELDL (234 aa)). The Proton acceptor role is filled by Glu40. Catalysis depends on Lys108, which acts as the Proton donor. The Nucleophile role is filled by Cys140.

In terms of assembly, monomer.

The enzyme catalyses (R)-piperazine-2-carboxamide + H2O = (R)-piperazine-2-carboxylate + NH4(+). The catalysed reaction is beta-alaninamide + H2O = beta-alanine + NH4(+). Its activity is regulated as follows. Completely inhibited by p-chloromercuribenzoate, N-ethylmaleimide, MnSO(4), MnCl(2), CoCl(2), NiCl(2), CuSO(4), CuCl(2), ZnSO(4), ZnCl(2), AgNO(3), CdCl(2), HgCl(2) and PbCl(2). Partially inhibited by FeCl(3) and Fe(NH(4))(2)(SO(4))(2). Slightly enhanced by dithiothreitol. Unaffected by LiBr, H(2)BO(3), NaCl, MgSO(4), MgCl(2), AlCl(3), KCl, CaCl(2), CrCl(3), RbCl, Na(2)MoO(4), (NH(4))(6)Mo(7)O(24), CsCl and BaCl(2). Unaffected by the chelating agents o-phenanthroline, 8-hydroxyquinoline, enthylenediaminetetraacetic acid and alpha,alpha'-dipyridyl. Not inhibited by the carbonyl reagents hydroxylamine, phenylhydrazine, hydrazine, D,L-penicillamine and D-cycloserine. Not affected by the serine protease inhibitor phenylmethanesulfonyl fluoride, the serine/cysteine protease inhibitor leupeptine or the aspartic protease inhibitor pepstatin. In terms of biological role, hydrolyzes (R)-piperazine-2-carboxamide and (R)-piperazine-2-tert-butylcarboxamide with strict R-stereoselectivity. Also active towards beta-alaninamide, piperidine-3-carboxmide, D-glutaminamide and slightly active towards L-glutaminamide and piperidine-4-carboxamide. The chain is (R)-stereoselective amidase from Pseudomonas sp.